Consider the following 78-residue polypeptide: RNA-binding protein Hfq (78 aa).

The Sm domain occupies Asp-10–Val-69.

It belongs to the Hfq family. In terms of assembly, homohexamer.

In terms of biological role, RNA chaperone that binds small regulatory RNA (sRNAs) and mRNAs to facilitate mRNA translational regulation in response to envelope stress, environmental stress and changes in metabolite concentrations. Also binds with high specificity to tRNAs. The sequence is that of RNA-binding protein Hfq from Dechloromonas aromatica (strain RCB).